The primary structure comprises 120 residues: Late histone H2A.2.2 (120 aa).

The segment covering 1–18 (MSGRGKGAKSKSKAKSRS) has biased composition (basic residues). The segment at 1 to 22 (MSGRGKGAKSKSKAKSRSSRAG) is disordered. Serine 2 carries the post-translational modification N-acetylserine. A Phosphoserine modification is found at serine 2. Glutamine 104 is modified (N5-methylglutamine). Residue lysine 119 forms a Glycyl lysine isopeptide (Lys-Gly) (interchain with G-Cter in ubiquitin) linkage.

It belongs to the histone H2A family. The nucleosome is a histone octamer containing two molecules each of H2A, H2B, H3 and H4 assembled in one H3-H4 heterotetramer and two H2A-H2B heterodimers. The octamer wraps approximately 147 bp of DNA. In terms of processing, monoubiquitination of Lys-119 gives a specific tag for epigenetic transcriptional repression. Post-translationally, phosphorylation of Ser-2 directly represses transcription.

The protein localises to the nucleus. Its subcellular location is the chromosome. Functionally, core component of nucleosome. Nucleosomes wrap and compact DNA into chromatin, limiting DNA accessibility to the cellular machineries which require DNA as a template. Histones thereby play a central role in transcription regulation, DNA repair, DNA replication and chromosomal stability. DNA accessibility is regulated via a complex set of post-translational modifications of histones, also called histone code, and nucleosome remodeling. In Psammechinus miliaris (Green sea urchin), this protein is Late histone H2A.2.2.